The primary structure comprises 283 residues: Phosphatidylglycerol--prolipoprotein diacylglyceryl transferase (283 aa).

The next 3 membrane-spanning stretches (helical) occupy residues 17–37 (LAVRWYALSYILGFILFTFLG), 56–76 (FLTWGILGVILGGRLGYVLFY), and 88–108 (IFKVWEGGMSFHGGFLGVVIA). Position 139 (Arg139) interacts with a 1,2-diacyl-sn-glycero-3-phospho-(1'-sn-glycerol). 2 consecutive transmembrane segments (helical) span residues 222-242 (GQVASLFLGGYGIFRFIAEFA) and 255-275 (GLSMGQWLSVPMIVLGIVGFV).

It belongs to the Lgt family.

It localises to the cell inner membrane. The catalysed reaction is L-cysteinyl-[prolipoprotein] + a 1,2-diacyl-sn-glycero-3-phospho-(1'-sn-glycerol) = an S-1,2-diacyl-sn-glyceryl-L-cysteinyl-[prolipoprotein] + sn-glycerol 1-phosphate + H(+). It participates in protein modification; lipoprotein biosynthesis (diacylglyceryl transfer). Catalyzes the transfer of the diacylglyceryl group from phosphatidylglycerol to the sulfhydryl group of the N-terminal cysteine of a prolipoprotein, the first step in the formation of mature lipoproteins. In Neisseria meningitidis serogroup B (strain ATCC BAA-335 / MC58), this protein is Phosphatidylglycerol--prolipoprotein diacylglyceryl transferase.